The chain runs to 137 residues: F420H(2)-dependent biliverdin reductase (137 aa).

Residues 36–41, 54–55, 60–61, Arg67, and 78–81 contribute to the coenzyme F420-(gamma-Glu)n site; these read HVVAVG, IT, QK, and GARW.

It belongs to the F420H(2)-dependent biliverdin reductase family. In terms of assembly, homodimer.

Its subcellular location is the cell surface. The protein resides in the secreted. It catalyses the reaction (4Z,15Z)-bilirubin IXalpha + oxidized coenzyme F420-(gamma-L-Glu)(n) + H(+) = biliverdin IXalpha + reduced coenzyme F420-(gamma-L-Glu)(n). Catalyzes the F420H(2)-dependent reduction of biliverdin-IXalpha at C10 position, leading to bilirubin-IXalpha, a potent antioxidant. As biliverdin-IXalpha is produced in high amounts in macrophages infected with M.tuberculosis, its reduction by Rv2074 may play a role in protecting mycobacteria against oxidative stress, aiding the persistence of M.tuberculosis infection. This chain is F420H(2)-dependent biliverdin reductase, found in Mycobacterium tuberculosis (strain CDC 1551 / Oshkosh).